A 590-amino-acid polypeptide reads, in one-letter code: Leukocyte immunoglobulin-like receptor subfamily B member 5 (590 aa).

The first 23 residues, 1–23 (MTLTLSVLICLGLSVGPRTCVQA), serve as a signal peptide directing secretion. The Extracellular portion of the chain corresponds to 24-458 (GTLPKPTLWA…PQSGLGRHLG (435 aa)). 4 Ig-like C2-type domains span residues 27 to 116 (PKPT…LELV), 111 to 228 (DPLE…SLLI), 224 to 313 (PSLL…DPLD), and 337 to 418 (GENV…LVVS). Cysteine 49 and cysteine 98 form a disulfide bridge. Residue asparagine 139 is glycosylated (N-linked (GlcNAc...) asparagine). 2 disulfide bridges follow: cysteine 144–cysteine 195 and cysteine 244–cysteine 295. 2 N-linked (GlcNAc...) asparagine glycosylation sites follow: asparagine 279 and asparagine 339. An intrachain disulfide couples cysteine 344 to cysteine 395. Over residues 416–433 (VVSGPSGDPSLSPTGSTP) the composition is skewed to low complexity. A disordered region spans residues 416–449 (VVSGPSGDPSLSPTGSTPTPGPEDQPLTPTGLDP). The chain crosses the membrane as a helical span at residues 459–479 (VVTGVSVAFVLLLFLLLFLLL). Residues 480–590 (RHRHQSKHRT…PSIYAPLAIH (111 aa)) are Cytoplasmic-facing. Disordered regions lie at residues 488–514 (RTSA…KRAS) and 529–550 (KDTQ…EAPQ). At serine 514 the chain carries Phosphoserine. The short motif at 552–557 (VTYAQL) is the ITIM motif 1 element. Positions 562 to 578 (LRREATEPPPSQEREPP) are enriched in basic and acidic residues. A disordered region spans residues 562-590 (LRREATEPPPSQEREPPAEPSIYAPLAIH). Residues 582–587 (SIYAPL) carry the ITIM motif 2 motif.

Detected in a natural killer (NK) cells.

The protein resides in the membrane. Functionally, may act as receptor for class I MHC antigens. The chain is Leukocyte immunoglobulin-like receptor subfamily B member 5 (LILRB5) from Homo sapiens (Human).